Here is a 201-residue protein sequence, read N- to C-terminus: FMN reductase (NADH) RutF 1 (201 aa).

Over residues 167–195 (PRAPRSGSAPAEPARAARAVGARPAEGPA) the composition is skewed to low complexity. The segment at 167–201 (PRAPRSGSAPAEPARAARAVGARPAEGPALALRSA) is disordered.

It belongs to the non-flavoprotein flavin reductase family. RutF subfamily.

It catalyses the reaction FMNH2 + NAD(+) = FMN + NADH + 2 H(+). Functionally, catalyzes the reduction of FMN to FMNH2 which is used to reduce pyrimidine by RutA via the Rut pathway. The protein is FMN reductase (NADH) RutF 1 of Methylorubrum extorquens (strain CM4 / NCIMB 13688) (Methylobacterium extorquens).